The primary structure comprises 582 residues: Pineapple eye protein (582 aa).

A C2HC pre-PHD-type zinc finger spans residues 6–44 (ELQCLICKYSDTDDLVFGEWMIVRNLQVHYFCLLLSTHL). An extended PHD domain (ePHD) region spans residues 6–119 (ELQCLICKYS…QYKSYCYKCR (114 aa)). Residues 72–119 (RKCWYCNKIGASLQCDRCRSLFHLKCGLENRAVFEFCGQYKSYCYKCR) form a PHD-type; atypical zinc finger. Disordered stretches follow at residues 292–311 (PARTTEETNADGDNQVDGSF) and 323–422 (RSLT…ASEI). Polar residues predominate over residues 340-363 (SSNITVIFSQPKSNATSERLSLSP). Basic and acidic residues predominate over residues 383–399 (SIDENHSPQPIARRDTS).

Its function is as follows. Required for survival of imaginal disk cells possibly by regulation of cell apoptosis. Required for germline stem cell self-renewal through mediation of BMP signaling. This chain is Pineapple eye protein, found in Drosophila melanogaster (Fruit fly).